Here is a 774-residue protein sequence, read N- to C-terminus: Probable ubiquitin-like-specific protease 2A (774 aa).

Positions 118–141 (SSLSENDEVSTGEATNPASDPHEV) are disordered. Catalysis depends on residues H400, D430, and C485. Residues 548 to 568 (ILPANSKSEPPHCGVSNRNDQ) form a disordered region.

Belongs to the peptidase C48 family.

Protease that catalyzes two essential functions in the SUMO pathway: processing of full-length SUMOs to their mature forms and deconjugation of SUMO from targeted proteins. The protein is Probable ubiquitin-like-specific protease 2A (ULP2A) of Arabidopsis thaliana (Mouse-ear cress).